The chain runs to 341 residues: Allergen Mag (341 aa).

The chain is Allergen Mag (MAG) from Dermatophagoides farinae (American house dust mite).